Consider the following 152-residue polypeptide: Small ribosomal subunit protein uS15 (152 aa).

The protein belongs to the universal ribosomal protein uS15 family. In terms of assembly, part of the 30S ribosomal subunit.

The polypeptide is Small ribosomal subunit protein uS15 (Methanospirillum hungatei JF-1 (strain ATCC 27890 / DSM 864 / NBRC 100397 / JF-1)).